The chain runs to 412 residues: UPF0754 membrane protein Synpcc7942_1098 (412 aa).

The next 2 helical transmembrane spans lie at 8 to 28 and 390 to 410; these read LWLLPPVVGGIIGYFTNDLAI and IGGVLGVLLGCVQSLINVWSL.

It belongs to the UPF0754 family.

The protein localises to the cell inner membrane. The sequence is that of UPF0754 membrane protein Synpcc7942_1098 from Synechococcus elongatus (strain ATCC 33912 / PCC 7942 / FACHB-805) (Anacystis nidulans R2).